A 314-amino-acid chain; its full sequence is tRNA pseudouridine synthase B (314 aa).

H43 lines the substrate pocket. D48 functions as the Nucleophile in the catalytic mechanism. Y76, Y179, and L200 together coordinate substrate.

Belongs to the pseudouridine synthase TruB family. Type 1 subfamily.

The catalysed reaction is uridine(55) in tRNA = pseudouridine(55) in tRNA. Functionally, responsible for synthesis of pseudouridine from uracil-55 in the psi GC loop of transfer RNAs. This is tRNA pseudouridine synthase B from Shigella flexneri.